The following is a 234-amino-acid chain: MPNPYFSFKQFTVYHDRCAMKVGTDGVLLGAWADVVSARNILDIGTGTGLISLMMAQRCNARIRAVDIDADAVEQARGNVAASPWQDRIEVELQDICHFTSETLFDVIVSNPPYFTDSLKCPGKQRNIARHTDFLDFDKLAGSAARLLHPEGVFSVIIPADGKESFLMAATRYGLHLSHQTFIHTKPGSEPKRVLLAFKFSVDKCVIDDLTIELSRHVYSEEYIALTKEFYLNM.

The protein belongs to the methyltransferase superfamily. tRNA (adenine-N(6)-)-methyltransferase family.

The protein localises to the cytoplasm. The catalysed reaction is adenosine(37) in tRNA1(Val) + S-adenosyl-L-methionine = N(6)-methyladenosine(37) in tRNA1(Val) + S-adenosyl-L-homocysteine + H(+). Specifically methylates the adenine in position 37 of tRNA(1)(Val) (anticodon cmo5UAC). The protein is tRNA1(Val) (adenine(37)-N6)-methyltransferase of Phocaeicola vulgatus (strain ATCC 8482 / DSM 1447 / JCM 5826 / CCUG 4940 / NBRC 14291 / NCTC 11154) (Bacteroides vulgatus).